We begin with the raw amino-acid sequence, 564 residues long: Iron-sensing transcriptional repressor (564 aa).

The GATA-type 1 zinc finger occupies 12-36 (CSNCHKTTTSLWRRGPDNSLLCNAC). The disordered stretch occupies residues 100-170 (ASKSQSGRKS…SSPPHEPSVT (71 aa)). Ser-109 is modified (phosphoserine). A compositionally biased stretch (low complexity) spans 109 to 120 (SLSPNPSSVPSS). Polar residues predominate over residues 135–148 (QIVSDTTTETSNGT). Residues 172–196 (CQNCATTNTPLWRRDESGNPICNAC) form a GATA-type 2 zinc finger. Disordered regions lie at residues 226–285 (GNAN…NTGV), 381–409 (DSSK…NPLG), and 443–496 (LLNP…VQGS). Composition is skewed to polar residues over residues 240-253 (SGDS…QSTR), 260-271 (SFPNGNGHASGN), 381-407 (DSSK…QSNP), and 450-486 (PSNS…SPVS).

As to quaternary structure, interacts with tup11.

The protein resides in the nucleus. Activated by iron. Its function is as follows. Transcriptional repressor that binds the consensus promoter sequence 5'-[AT]GATAA-3' during iron-replete conditions to down-regulate transcription of target genes. Represses the expression of the iron transporter fio1 in response to high iron concentrations. Also represses the expression of str1, str2 and str3. Represses the expression of shu1 in presence of iron. This Schizosaccharomyces pombe (strain 972 / ATCC 24843) (Fission yeast) protein is Iron-sensing transcriptional repressor.